The sequence spans 337 residues: Ribose-phosphate pyrophosphokinase 4 (337 aa).

Ser2 carries the N-acetylserine modification. Mg(2+) is bound by residues Asp158 and His160. Residues 241–256 (GCHVVIVDDLVQSGGT) are binding of phosphoribosylpyrophosphate.

This sequence belongs to the ribose-phosphate pyrophosphokinase family.

The enzyme catalyses D-ribose 5-phosphate + ATP = 5-phospho-alpha-D-ribose 1-diphosphate + AMP + H(+). The polypeptide is Ribose-phosphate pyrophosphokinase 4 (PRS4) (Arabidopsis thaliana (Mouse-ear cress)).